A 337-amino-acid chain; its full sequence is Protein BIG GRAIN 1-like (337 aa).

Disordered regions lie at residues 1 to 32 (MRDMEMRWAAPAPAARGRGRARRRAPDQPSFS), 120 to 163 (SAAG…RPAS), and 179 to 235 (KRPS…PSRS). The span at 137-146 (HEQPDVEKTA) shows a compositional bias: basic and acidic residues. 2 stretches are compositionally biased toward low complexity: residues 150 to 163 (PGSASARACRRPAS) and 195 to 209 (PACSTAPPSSSSSYA).

Belongs to the BIG GRAIN 1 (BG1) plant protein family.

Its subcellular location is the cell membrane. Its function is as follows. Involved in auxin transport. Regulator of the auxin signaling pathway. This Oryza sativa subsp. japonica (Rice) protein is Protein BIG GRAIN 1-like.